Consider the following 76-residue polypeptide: Secreted RxLR effector protein 31 (76 aa).

Residues 1–24 (MRHCACLFHLFLIGFLCNVYFSAC) form the signal peptide. The RxLR-dEER motif lies at 49–64 (RILRANDSEFLLTEER). An N-linked (GlcNAc...) asparagine glycan is attached at asparagine 54.

Belongs to the RxLR effector family.

It localises to the secreted. It is found in the host nucleus. The protein localises to the host cytoplasm. Its function is as follows. Secreted effector that dos not suppress the host cell death induced by cell death-inducing proteins. The polypeptide is Secreted RxLR effector protein 31 (Plasmopara viticola (Downy mildew of grapevine)).